Reading from the N-terminus, the 403-residue chain is Argininosuccinate synthase 1 (403 aa).

ATP is bound by residues 10–18 (SYSGGLDTS) and Ala-37. L-citrulline contacts are provided by Tyr-88 and Ser-93. Gly-118 contributes to the ATP binding site. Thr-120, Asn-124, and Asp-125 together coordinate L-aspartate. An L-citrulline-binding site is contributed by Asn-124. Arg-128, Ser-179, Ser-188, Glu-264, and Tyr-276 together coordinate L-citrulline.

The protein belongs to the argininosuccinate synthase family. Type 1 subfamily. As to quaternary structure, homotetramer.

It is found in the cytoplasm. It catalyses the reaction L-citrulline + L-aspartate + ATP = 2-(N(omega)-L-arginino)succinate + AMP + diphosphate + H(+). It functions in the pathway amino-acid biosynthesis; L-arginine biosynthesis; L-arginine from L-ornithine and carbamoyl phosphate: step 2/3. The polypeptide is Argininosuccinate synthase 1 (Rhizobium johnstonii (strain DSM 114642 / LMG 32736 / 3841) (Rhizobium leguminosarum bv. viciae)).